The chain runs to 354 residues: Homer protein homolog 1 (354 aa).

One can recognise a WH1 domain in the interval 1–110 (MGEQPIFSTR…EKFQEFKEAA (110 aa)). Residue Gly2 is modified to N-acetylglycine. A disordered region spans residues 114 to 172 (KEKSQEKMELTSTPSQESAGGDLQSPLTPESINGTDDERTPDLTQNSEPRPEPTQNALP). 2 stretches are compositionally biased toward polar residues: residues 138 to 147 (SPLTPESING) and 155 to 172 (DLTQ…NALP). Residues 181-352 (KHWEAELATL…LRDNLAKLLE (172 aa)) are a coiled coil. The required for tetramerization stretch occupies residues 290–354 (KLQEVEIRNK…DNLAKLLERS (65 aa)). Ser306 is modified (phosphoserine).

It belongs to the Homer family. In terms of assembly, tetramer; this tetrameric structure is critical for forming the high-order complex with SHANK1, which in turn is necessary for the structural and functional integrity of dendritic spines. Interacts with GRM1, GRM5, ITPR1, DNM3, RYR1, RYR2 and SHANK3. Interacts with IFT57 and OPHN1. Encodes a coiled-coil structure that mediates homo- and heteromultimerization. Interacts with SHANK1; forms high-order polymerized complex with a mesh-like network structure, at least composed of SHANK1, HOMER1 and DLGAP1; the complex formation is SHANK1 multimerization dependent. Interacts with NFATC4. Interacts with DAGLA (via PPXXF motif); this interaction is required for the cell membrane localization of DAGLA. Interacts with SRGAP2.

Its subcellular location is the cytoplasm. It is found in the postsynaptic density. The protein resides in the synapse. The protein localises to the cell projection. It localises to the dendritic spine. Functionally, postsynaptic density scaffolding protein. Binds and cross-links cytoplasmic regions of GRM1, GRM5, ITPR1, DNM3, RYR1, RYR2, SHANK1 and SHANK3. By physically linking GRM1 and GRM5 with ER-associated ITPR1 receptors, it aids the coupling of surface receptors to intracellular calcium release. May also couple GRM1 to PI3 kinase through its interaction with AGAP2. Forms a high-order complex with SHANK1, which in turn is necessary for the structural and functional integrity of dendritic spines. Negatively regulates T cell activation by inhibiting the calcineurin-NFAT pathway. Acts by competing with calcineurin/PPP3CA for NFAT protein binding, hence preventing NFAT activation by PPP3CA. This chain is Homer protein homolog 1, found in Bos taurus (Bovine).